The sequence spans 424 residues: Arginine ADP-riboxanase OspC4 (424 aa).

Residues His-85, Gln-86, Ser-87, Leu-91, Ile-104, Asn-114, Phe-130, His-148, Phe-153, Asp-173, and Glu-268 each contribute to the NAD(+) site. Residue Glu-268 is part of the active site. 3 ANK repeats span residues 311 to 340 (MAHQALAYSLGNKKADIALYLLSKFNFTKQ), 355 to 386 (NLYDVEYLLSKDGANYKVLEYFINNGLVDVNK), and 393 to 422 (SGDTMLDNAMKSKDSKMIDFFIKKWSGIRQ).

This sequence belongs to the OspC family.

It is found in the secreted. Its subcellular location is the host cytoplasm. The catalysed reaction is L-arginyl-[protein] + NAD(+) = ADP-riboxanated L-argininyl-[protein] + nicotinamide + NH4(+) + H(+). In terms of biological role, ADP-riboxanase effector that mediates arginine ADP-riboxanation of host caspase CASP4/CASP11, thereby inhibiting pyroptosis. In Shigella flexneri, this protein is Arginine ADP-riboxanase OspC4.